Here is a 389-residue protein sequence, read N- to C-terminus: Chalcone synthase 3 (389 aa).

Cys-164 is an active-site residue.

This sequence belongs to the thiolase-like superfamily. Chalcone/stilbene synthases family.

It carries out the reaction (E)-4-coumaroyl-CoA + 3 malonyl-CoA + 3 H(+) = 2',4,4',6'-tetrahydroxychalcone + 3 CO2 + 4 CoA. Its pathway is secondary metabolite biosynthesis; flavonoid biosynthesis. The primary product of this enzyme is 4,2',4',6'-tetrahydroxychalcone (also termed naringenin-chalcone or chalcone) which can under specific conditions spontaneously isomerize into naringenin. The sequence is that of Chalcone synthase 3 (CHS3) from Trifolium subterraneum (Subterranean clover).